The following is a 698-amino-acid chain: Probable xyloglucan glycosyltransferase 2 (698 aa).

2 helical membrane-spanning segments follow: residues 124–144 (GFLALSLLALAVELAAYWNGW) and 190–210 (ILLFVIQSMDRLVLCLGCFWI). Asp272 is a catalytic residue. The substrate site is built by Asp331 and Asp333. Asp425 is an active-site residue. 4 helical membrane-spanning segments follow: residues 503–523 (LILPFYSFTLFCVILPLTMFV), 528–548 (LPVWVICYVPVCMSFLNILPS), 653–668 (LALSLLLLTAATRSLL), and 673–693 (IHFYFLLFQGVSFLFVGLDLI).

Belongs to the glycosyltransferase 2 family. Plant cellulose synthase-like C subfamily.

It localises to the golgi apparatus membrane. Its function is as follows. Probable beta-1,4-glucan synthase rather involved in the synthesis of the xyloglucan backbone than cellulose. Seems to work simultaneously with xyloglucan 6-xylosyltransferase. Xyloglucan is a noncellulosic polysaccharides of plant cell wall and consists of a glucan backbone substituted by xylose, galactose and fucose. The protein is Probable xyloglucan glycosyltransferase 2 (CSLC2) of Oryza sativa subsp. japonica (Rice).